Consider the following 242-residue polypeptide: tRNA (guanine-N(1)-)-methyltransferase (242 aa).

Residues Gly108 and 127–132 (IGDYVL) each bind S-adenosyl-L-methionine.

This sequence belongs to the RNA methyltransferase TrmD family. As to quaternary structure, homodimer.

The protein resides in the cytoplasm. The catalysed reaction is guanosine(37) in tRNA + S-adenosyl-L-methionine = N(1)-methylguanosine(37) in tRNA + S-adenosyl-L-homocysteine + H(+). In terms of biological role, specifically methylates guanosine-37 in various tRNAs. This chain is tRNA (guanine-N(1)-)-methyltransferase, found in Lactobacillus acidophilus (strain ATCC 700396 / NCK56 / N2 / NCFM).